Here is a 111-residue protein sequence, read N- to C-terminus: Probable monothiol glutaredoxin 2 (111 aa).

The 103-residue stretch at 7 to 109 (LKFIQNAIKK…KMLKDETKLI (103 aa)) folds into the Glutaredoxin domain. A glutathione-binding site is contributed by Lys24. Cys32 provides a ligand contact to [2Fe-2S] cluster. Glutathione is bound by residues Arg61, Phe73, and 86 to 87 (CD).

The protein belongs to the glutaredoxin family. Monothiol subfamily.

The polypeptide is Probable monothiol glutaredoxin 2 (grxC2) (Rickettsia typhi (strain ATCC VR-144 / Wilmington)).